Here is a 248-residue protein sequence, read N- to C-terminus: ATP synthase delta chain, chloroplastic (248 aa).

The transit peptide at 1-60 (MAALQQTPITFQSRSPPPTQIISGPTAKLSFSGGLKLPKLTIKLRSNRTSRRGGGAAGSK) directs the protein to the chloroplast.

The protein belongs to the ATPase delta chain family. As to quaternary structure, F-type ATPases have 2 components, CF(1) - the catalytic core - and CF(0) - the membrane proton channel. CF(1) has five subunits: alpha(3), beta(3), gamma(1), delta(1), epsilon(1). CF(0) has three main subunits: a, b and c.

The protein localises to the plastid. Its subcellular location is the chloroplast thylakoid membrane. This protein seems to be part of the stalk that links CF(0) to CF(1). It either transmits conformational changes from CF(0) into CF(1) or is implicated in proton conduction. This is ATP synthase delta chain, chloroplastic (ATPD) from Nicotiana tabacum (Common tobacco).